The primary structure comprises 625 residues: UvrABC system protein C (625 aa).

Positions D13–I92 constitute a GIY-YIG domain. The UVR domain occupies E204–I239.

Belongs to the UvrC family. Interacts with UvrB in an incision complex.

The protein resides in the cytoplasm. Its function is as follows. The UvrABC repair system catalyzes the recognition and processing of DNA lesions. UvrC both incises the 5' and 3' sides of the lesion. The N-terminal half is responsible for the 3' incision and the C-terminal half is responsible for the 5' incision. This Acetivibrio thermocellus (strain ATCC 27405 / DSM 1237 / JCM 9322 / NBRC 103400 / NCIMB 10682 / NRRL B-4536 / VPI 7372) (Clostridium thermocellum) protein is UvrABC system protein C.